Reading from the N-terminus, the 494-residue chain is Tyrosinase (494 aa).

Positions 38, 53, 64, 224, 228, and 256 each coordinate Cu cation.

It belongs to the tyrosinase family. It depends on Cu(2+) as a cofactor.

It catalyses the reaction 2 L-dopa + O2 = 2 L-dopaquinone + 2 H2O. It carries out the reaction L-tyrosine + O2 = L-dopaquinone + H2O. In Rhizobium meliloti (Ensifer meliloti), this protein is Tyrosinase (mepA).